The following is a 555-amino-acid chain: MKSDIEIARSVELKKIKQVAESIGIPREEVENYGRYIAKIPEQLIDEEKVKKSNLVLVTAITATKAGIGKTTVSIGLALGLNKIGKKAIVALREPSLGPCFGMKGGAAGGGYAQVLPMEKINLHFTGDFHAITSAHNMISALLDNYLYQNQAKGFGLKEILWRRVLDVNDRSLRSIVVGLGPKSNGITQESGFDITPASEIMAILCLSKDVEDLRRRIENILLGFTYDDQPFTVKDLGVAGAITVLLKDAIHPNLVQTTEGTAAFVHGGPFANIAHGCNSILATKLAMSFGDYVITEAGFGADLGAEKFYNIKCRKSGLQPKLTVIVATAQGLKMHGGVSLDRIKEPNMEGLKEGLRNLDKHIRNLRSFGQTVVVAFNKFATDTDEEMEMLREHCEQLGVGYAINNAFSDGGDGAVDMARLVVDTIENNPSEPLRYTYKEEDSIQQKIEKVATNLYGASVITYSSIARNRIKLIEKMGITHYPVCIAKTQYSFSADPKIYGAVNNFEFHIKDIVINNGAEMIVAIAGEILRMPGLPKEPQALHIDIVDGEIEGLS.

64–71 is an ATP binding site; that stretch reads TKAGIGKT.

Belongs to the formate--tetrahydrofolate ligase family.

The catalysed reaction is (6S)-5,6,7,8-tetrahydrofolate + formate + ATP = (6R)-10-formyltetrahydrofolate + ADP + phosphate. The protein operates within one-carbon metabolism; tetrahydrofolate interconversion. This is Formate--tetrahydrofolate ligase from Bacteroides thetaiotaomicron (strain ATCC 29148 / DSM 2079 / JCM 5827 / CCUG 10774 / NCTC 10582 / VPI-5482 / E50).